The primary structure comprises 607 residues: DNA mismatch repair protein MutL (607 aa).

Belongs to the DNA mismatch repair MutL/HexB family.

Functionally, this protein is involved in the repair of mismatches in DNA. It is required for dam-dependent methyl-directed DNA mismatch repair. May act as a 'molecular matchmaker', a protein that promotes the formation of a stable complex between two or more DNA-binding proteins in an ATP-dependent manner without itself being part of a final effector complex. This is DNA mismatch repair protein MutL from Gemmatimonas aurantiaca (strain DSM 14586 / JCM 11422 / NBRC 100505 / T-27).